The primary structure comprises 425 residues: Cytokine receptor-like factor 1 (425 aa).

The first 33 residues, 1–33 (MPAGRPGPVAQSARRPPRPLSSLWSPLLLCVLG), serve as a signal peptide directing secretion. Positions 35-134 (PRGGSGAHTA…SILAGSCLYV (100 aa)) constitute an Ig-like C2-type domain. Asn95, Asn107, and Asn143 each carry an N-linked (GlcNAc...) asparagine glycan. 2 consecutive Fibronectin type-III domains span residues 140 to 235 (KPFN…VLDV) and 240 to 344 (PPPD…TPRS). A disulfide bond links Cys146 and Cys156. N-linked (GlcNAc...) asparagine glycosylation occurs at Asn171. An intrachain disulfide couples Cys187 to Cys198. A Phosphoserine modification is found at Ser222. Residue Asn295 is glycosylated (N-linked (GlcNAc...) asparagine). The WSXWS motif motif lies at 330–334 (WSEWS). Positions 335 to 366 (HPTAASTPRSERPGPGGGVCEPRGGEPSSGPV) are disordered. An N-linked (GlcNAc...) asparagine glycan is attached at Asn385. Residues 402–425 (HKTRNQDEGILPSGRRGAARGPAG) form a disordered region. The segment covering 415-425 (GRRGAARGPAG) has biased composition (low complexity).

The protein belongs to the type I cytokine receptor family. Type 3 subfamily. Forms covalent di- and tetramers. Forms a heteromeric complex with cardiotrophin-like cytokine CLCF1/CLC; the CRLF1-CLCF1 complex is a ligand for the ciliary neurotrophic factor receptor/CNTFR. The CRLF1-CLCF1 heterodimer, as well as tripartite signaling complex formed by CRLF1, CLCF1 and CNTFR bind SORL1 (via N-terminal ectodomain); within this complex, the interaction is mediated predominantly by the CRLF1 moiety. As to expression, widely expressed in the embryo. Not detected in the brain of adult mice.

The protein localises to the secreted. Its function is as follows. In complex with CLCF1, forms a heterodimeric neurotropic cytokine that plays a crucial role during neuronal development. Plays a role in the initiation and/or maintenance of suckling in neonatal mice. May also play a regulatory role in the immune system. The chain is Cytokine receptor-like factor 1 (Crlf1) from Mus musculus (Mouse).